The sequence spans 513 residues: Gluconokinase (513 aa).

ATP contacts are provided by residues Lys16, Thr261, Gly300, and 412-416; that span reads GFARS.

Belongs to the FGGY kinase family.

The enzyme catalyses D-gluconate + ATP = 6-phospho-D-gluconate + ADP + H(+). Its pathway is carbohydrate acid metabolism; D-gluconate degradation. With respect to regulation, catabolite repression by gluconate. In Bacillus subtilis (strain 168), this protein is Gluconokinase (gntK).